The primary structure comprises 379 residues: Cytochrome b (379 aa).

4 helical membrane-spanning segments follow: residues 33–53 (FGSL…FLAM), 77–98 (WMIR…FIHI), 113–133 (WNIG…GYVL), and 178–198 (FFAF…VHLL). His-83 and His-97 together coordinate heme b. Heme b is bound by residues His-182 and His-196. Position 201 (His-201) interacts with a ubiquinone. Transmembrane regions (helical) follow at residues 226–246 (MKDI…VLFY), 288–308 (LGGV…PMMH), 320–340 (LSQC…WIGG), and 347–367 (FIMI…IIMP).

It belongs to the cytochrome b family. The cytochrome bc1 complex contains 11 subunits: 3 respiratory subunits (MT-CYB, CYC1 and UQCRFS1), 2 core proteins (UQCRC1 and UQCRC2) and 6 low-molecular weight proteins (UQCRH/QCR6, UQCRB/QCR7, UQCRQ/QCR8, UQCR10/QCR9, UQCR11/QCR10 and a cleavage product of UQCRFS1). This cytochrome bc1 complex then forms a dimer. Heme b serves as cofactor.

Its subcellular location is the mitochondrion inner membrane. Functionally, component of the ubiquinol-cytochrome c reductase complex (complex III or cytochrome b-c1 complex) that is part of the mitochondrial respiratory chain. The b-c1 complex mediates electron transfer from ubiquinol to cytochrome c. Contributes to the generation of a proton gradient across the mitochondrial membrane that is then used for ATP synthesis. This Massoutiera mzabi (Mzab gundi) protein is Cytochrome b (MT-CYB).